Reading from the N-terminus, the 283-residue chain is Release factor glutamine methyltransferase (283 aa).

S-adenosyl-L-methionine-binding residues include Asp143 and Asn189. Substrate is bound at residue 189–192 (NPPY).

This sequence belongs to the protein N5-glutamine methyltransferase family. PrmC subfamily.

The enzyme catalyses L-glutaminyl-[peptide chain release factor] + S-adenosyl-L-methionine = N(5)-methyl-L-glutaminyl-[peptide chain release factor] + S-adenosyl-L-homocysteine + H(+). Its function is as follows. Methylates the class 1 translation termination release factors RF1/PrfA and RF2/PrfB on the glutamine residue of the universally conserved GGQ motif. This chain is Release factor glutamine methyltransferase, found in Clostridium botulinum (strain Hall / ATCC 3502 / NCTC 13319 / Type A).